Reading from the N-terminus, the 83-residue chain is Putative membrane protein insertion efficiency factor (83 aa).

The interval 64–83 (GGFDPVPLKKDKNSKTTHHH) is disordered.

It belongs to the UPF0161 family.

It is found in the cell membrane. Could be involved in insertion of integral membrane proteins into the membrane. The protein is Putative membrane protein insertion efficiency factor of Staphylococcus epidermidis (strain ATCC 12228 / FDA PCI 1200).